We begin with the raw amino-acid sequence, 459 residues long: MPSKTDFTSSTMTPREIVQELDRHIVGQQAAKRSVAIALRNRWRRMQLPEELRNEVMPKNILMIGPTGVGKTEIARRLATLANAPFVKVEATRFTEVGYVGKDVEQIGRDLVDTAVKMYREQAKVRVRTQAEEYAEERILDALLPRRSVGIGFDADADAIRQEPSAHESETRAKFRRMLRSGELEEREIELDVAVNVSMDIMTPPGMEEMGQQLRQMFSNIGGGKSQKRKLAIKAARPLLIEEEAAKLVNEDEIRAAAIEACEQNGIVFIDEIDKVVKRGDTVGGGDVSREGVQRDLLPLVEGSNVSTKYGTIRTNHILFIASGAFHLTKPSDLIPELQGRFPIRVELDALSKADFIRILTEPKAALTKQYQELLKTEGVSLDFTEDAIDRIAEIAYLVNERQENIGARRLHTVLERLLETLSYESPDRDGESVTVDADYVNAHLGELVKDPDLSRYIL.

ATP-binding positions include V26, 68-73, D271, E337, and R409; that span reads GVGKTE.

Belongs to the ClpX chaperone family. HslU subfamily. In terms of assembly, a double ring-shaped homohexamer of HslV is capped on each side by a ring-shaped HslU homohexamer. The assembly of the HslU/HslV complex is dependent on binding of ATP.

Its subcellular location is the cytoplasm. In terms of biological role, ATPase subunit of a proteasome-like degradation complex; this subunit has chaperone activity. The binding of ATP and its subsequent hydrolysis by HslU are essential for unfolding of protein substrates subsequently hydrolyzed by HslV. HslU recognizes the N-terminal part of its protein substrates and unfolds these before they are guided to HslV for hydrolysis. The polypeptide is ATP-dependent protease ATPase subunit HslU (Xylella fastidiosa (strain M23)).